A 30-amino-acid chain; its full sequence is Protein ScvA (30 aa).

The interval 1–30 (MERQNVQQQRGKDQRPQRPGASNPRRPNQR) is disordered.

Functionally, might be involved in DNA-binding; the protein binds DNA in gel-shift assays and immunogold electron microscopy shows labelling of condensed chromatin. The polypeptide is Protein ScvA (scvA) (Coxiella burnetii (strain RSA 493 / Nine Mile phase I)).